The primary structure comprises 241 residues: DNA repair protein RecO (241 aa).

This sequence belongs to the RecO family.

In terms of biological role, involved in DNA repair and RecF pathway recombination. The protein is DNA repair protein RecO of Orientia tsutsugamushi (strain Ikeda) (Rickettsia tsutsugamushi).